We begin with the raw amino-acid sequence, 449 residues long: Phosphoglucosamine mutase (449 aa).

The active-site Phosphoserine intermediate is Ser-104. Positions 104, 243, 245, and 247 each coordinate Mg(2+). Phosphoserine is present on Ser-104.

This sequence belongs to the phosphohexose mutase family. The cofactor is Mg(2+). Post-translationally, activated by phosphorylation.

It catalyses the reaction alpha-D-glucosamine 1-phosphate = D-glucosamine 6-phosphate. Functionally, catalyzes the conversion of glucosamine-6-phosphate to glucosamine-1-phosphate. The protein is Phosphoglucosamine mutase of Xanthomonas euvesicatoria pv. vesicatoria (strain 85-10) (Xanthomonas campestris pv. vesicatoria).